Reading from the N-terminus, the 370-residue chain is tRNA 2-selenouridine synthase (370 aa).

The Rhodanese domain maps to 12 to 136 (FLDDVPMMDM…MRTFLLETTQ (125 aa)). The active-site S-selanylcysteine intermediate is Cys-95.

It belongs to the SelU family. In terms of assembly, monomer.

It carries out the reaction 5-methylaminomethyl-2-thiouridine(34) in tRNA + selenophosphate + (2E)-geranyl diphosphate + H2O + H(+) = 5-methylaminomethyl-2-selenouridine(34) in tRNA + (2E)-thiogeraniol + phosphate + diphosphate. The enzyme catalyses 5-methylaminomethyl-2-thiouridine(34) in tRNA + (2E)-geranyl diphosphate = 5-methylaminomethyl-S-(2E)-geranyl-thiouridine(34) in tRNA + diphosphate. It catalyses the reaction 5-methylaminomethyl-S-(2E)-geranyl-thiouridine(34) in tRNA + selenophosphate + H(+) = 5-methylaminomethyl-2-(Se-phospho)selenouridine(34) in tRNA + (2E)-thiogeraniol. The catalysed reaction is 5-methylaminomethyl-2-(Se-phospho)selenouridine(34) in tRNA + H2O = 5-methylaminomethyl-2-selenouridine(34) in tRNA + phosphate. Involved in the post-transcriptional modification of the uridine at the wobble position (U34) of tRNA(Lys), tRNA(Glu) and tRNA(Gln). Catalyzes the conversion of 2-thiouridine (S2U-RNA) to 2-selenouridine (Se2U-RNA). Acts in a two-step process involving geranylation of 2-thiouridine (S2U) to S-geranyl-2-thiouridine (geS2U) and subsequent selenation of the latter derivative to 2-selenouridine (Se2U) in the tRNA chain. This Pseudomonas putida (strain ATCC 700007 / DSM 6899 / JCM 31910 / BCRC 17059 / LMG 24140 / F1) protein is tRNA 2-selenouridine synthase.